The following is a 79-amino-acid chain: Cell division protein ZapB (79 aa).

A coiled-coil region spans residues 4 to 78; sequence EVFEKLEAKV…LRALLGKMEE (75 aa).

It belongs to the ZapB family. In terms of assembly, homodimer. The ends of the coiled-coil dimer bind to each other, forming polymers. Interacts with FtsZ.

Its subcellular location is the cytoplasm. In terms of biological role, non-essential, abundant cell division factor that is required for proper Z-ring formation. It is recruited early to the divisome by direct interaction with FtsZ, stimulating Z-ring assembly and thereby promoting cell division earlier in the cell cycle. Its recruitment to the Z-ring requires functional FtsA or ZipA. This chain is Cell division protein ZapB, found in Pectobacterium carotovorum subsp. carotovorum (strain PC1).